The primary structure comprises 329 residues: Ribonucleoside-diphosphate reductase subunit beta (329 aa).

Positions 66, 97, and 101 each coordinate Fe cation. Residue tyrosine 105 is part of the active site. Fe cation is bound by residues glutamate 164, glutamate 198, and histidine 201.

Belongs to the ribonucleoside diphosphate reductase small chain family. In terms of assembly, tetramer of two alpha and two beta subunits. The cofactor is Fe cation.

The enzyme catalyses a 2'-deoxyribonucleoside 5'-diphosphate + [thioredoxin]-disulfide + H2O = a ribonucleoside 5'-diphosphate + [thioredoxin]-dithiol. Provides the precursors necessary for DNA synthesis. Catalyzes the biosynthesis of deoxyribonucleotides from the corresponding ribonucleotides. The sequence is that of Ribonucleoside-diphosphate reductase subunit beta (bnrdF) from Bacillus pumilus (Bacillus mesentericus).